The primary structure comprises 526 residues: MMKNLPEVGNGGGSGFPAVSVGNKKNKYQRMDSDAEESQNHREAEARNSRTRKYVMACAFFASLNNVLLGYDVGVMSGAVLFIQQDLKITEVQTEVLIGSLSIISLFGSLAGGRTSDSIGRKWTMALAALVFQTGAAVMAVAPSFEVLMIGRTLAGIGIGLGVMIAPVYIAEISPTVARGFFTSFPEIFINLGILLGYVSNYAFSGLSVHISWRIMLAVGILPSVFIGFALCVIPESPRWLVMKGRVDSAREVLMKTNERDDEAEERLAEIQLAAAHTEGSEDRPVWRELLSPSPVVRKMLIVGFGIQCFQQITGIDATVYYSPEILKEAGIQDETKLLAATVAVGVTKTVFILFATFLIDSVGRKPLLYVSTIGMTLCLFCLSFTLTFLGQGTLGITLALLFVCGNVAFFSIGMGPVCWVLTSEIFPLRLRAQASALGAVGNRVCSGLVAMSFLSVSRAITVGGTFFVFSLVSALSVIFVYVLVPETSGKSLEQIELMFQGGLERKDGEVELGDAERLVRKEQEF.

Disordered stretches follow at residues 1–21 and 28–47; these read MMKN…AVSV and YQRM…AEAR. Basic and acidic residues predominate over residues 29-47; sequence QRMDSDAEESQNHREAEAR. The next 12 helical transmembrane spans lie at 63–83, 92–112, 125–145, 153–173, 180–200, 215–235, 300–320, 340–360, 371–391, 395–415, 437–457, and 465–485; these read SLNN…VLFI, VQTE…SLAG, MALA…APSF, TLAG…IAEI, GFFT…GYVS, IMLA…CVIP, MLIV…DATV, AATV…TFLI, VSTI…TFLG, LGIT…SIGM, ALGA…FLSV, and GTFF…YVLV.

Belongs to the major facilitator superfamily. Sugar transporter (TC 2.A.1.1) family.

It is found in the membrane. In terms of biological role, plasma membrane sugar-proton symporter. The chain is Probable polyol transporter 4 (PLT4) from Arabidopsis thaliana (Mouse-ear cress).